We begin with the raw amino-acid sequence, 270 residues long: NAD(P)H-hydrate epimerase (270 aa).

The region spanning 25 to 234 is the YjeF N-terminal domain; that stretch reads FQQLMDLMQN…DLLAPEEIYQ (210 aa). 73–77 lines the (6S)-NADPHX pocket; that stretch reads DNGGQ. N74 and D144 together coordinate K(+). Residues 148–154 and E177 contribute to the (6S)-NADPHX site; that span reads GVGLYGH. Residue T180 coordinates K(+).

Belongs to the NnrE/AIBP family. It depends on K(+) as a cofactor.

The enzyme catalyses (6R)-NADHX = (6S)-NADHX. It carries out the reaction (6R)-NADPHX = (6S)-NADPHX. Its function is as follows. Catalyzes the epimerization of the S- and R-forms of NAD(P)HX, a damaged form of NAD(P)H that is a result of enzymatic or heat-dependent hydration. This is a prerequisite for the S-specific NAD(P)H-hydrate dehydratase to allow the repair of both epimers of NAD(P)HX. The polypeptide is NAD(P)H-hydrate epimerase (Legionella pneumophila (strain Paris)).